A 78-amino-acid chain; its full sequence is Large ribosomal subunit protein bL28 (78 aa).

The protein belongs to the bacterial ribosomal protein bL28 family.

The chain is Large ribosomal subunit protein bL28 from Francisella philomiragia subsp. philomiragia (strain ATCC 25017 / CCUG 19701 / FSC 153 / O#319-036).